The sequence spans 274 residues: Glucosamine-6-phosphate deaminase (274 aa).

Asp-72 (proton acceptor; for enolization step) is an active-site residue. Asp-141 serves as the catalytic For ring-opening step. Residue His-143 is the Proton acceptor; for ring-opening step of the active site. Catalysis depends on Glu-148, which acts as the For ring-opening step.

Belongs to the glucosamine/galactosamine-6-phosphate isomerase family. As to quaternary structure, homohexamer.

It is found in the cytoplasm. It catalyses the reaction alpha-D-glucosamine 6-phosphate + H2O = beta-D-fructose 6-phosphate + NH4(+). Its pathway is nucleotide-sugar biosynthesis; UDP-N-acetyl-alpha-D-glucosamine biosynthesis; alpha-D-glucosamine 6-phosphate from D-fructose 6-phosphate: step 1/1. In terms of biological role, catalyzes the reversible conversion of alpha-D-glucosamine 6-phosphate (GlcN-6P) into beta-D-fructose 6-phosphate (Fru-6P) and ammonium ion, a regulatory reaction step in de novo uridine diphosphate-N-acetyl-alpha-D-glucosamine (UDP-GlcNAc) biosynthesis via hexosamine pathway. The sequence is that of Glucosamine-6-phosphate deaminase from Drosophila pseudoobscura pseudoobscura (Fruit fly).